The sequence spans 632 residues: Dihydrolipoyllysine-residue acetyltransferase component of pyruvate dehydrogenase complex, mitochondrial (632 aa).

A mitochondrion-targeting transit peptide spans 1–77 (MWRVCARRVQ…LLGSPSRRSY (77 aa)). Lipoyl-binding domains follow at residues 82–158 (HQKV…CITV) and 208–284 (HMQI…CIIV). Residue Ser91 is modified to Phosphoserine. 2 positions are modified to N6-lipoyllysine: Lys123 and Lys249. One can recognise a Peripheral subunit-binding (PSBD) domain in the interval 342–379 (FVSPLAKKLAAEKGIDLTQVKGTGPEGRIIKKDIDSFV). CoA is bound at residue Arg446. Lys451 bears the N6-acetyllysine mark. At Lys458 the chain carries N6-succinyllysine. Residue Ser460 participates in CoA binding. Lys532 carries the N6-succinyllysine modification. Residues Ser551, Asn552, and Gly576 each coordinate CoA. Catalysis depends on residues His605 and Asp609.

Belongs to the 2-oxoacid dehydrogenase family. Part of the pyruvate dehydrogenase complex (PDHc) that is a multi-enzyme complex composed of multiple copies of three enzymes, pyruvate dehydrogenase (subunits PDH1A and PDHB, E1 component), dihydrolipoamide acetyltransferase (DLAT, E2 component), and dihydrolipoamide dehydrogenase (DLD, E3 component) to which is added an additional protein the E3-binding protein (PDHX, E3BP). In terms of structural architecture, the E2 and E3BP components assemble into a 60meric central core with icosahedral symmetry. The central core is decorated with E1 and E3 proteins. Currently, two alternative models for the E2:E3BP stoichiometry are considered as being either 48:12 (E2(48)-E3BP(12)) or 40:20 (E2(40)-E3BP(20)). Interacts with PDK2 and PDK3. Interacts with SIRT4. Interacts with PDHB. (R)-lipoate serves as cofactor. In terms of processing, delipoylated at Lys-123 and Lys-249 by SIRT4, delipoylation decreases the PHD complex activity. As to expression, expressed in flagella of epididymal sperm.

It localises to the mitochondrion matrix. It catalyses the reaction N(6)-[(R)-dihydrolipoyl]-L-lysyl-[protein] + acetyl-CoA = N(6)-[(R)-S(8)-acetyldihydrolipoyl]-L-lysyl-[protein] + CoA. Functionally, as part of the pyruvate dehydrogenase complex, catalyzes the transfers of an acetyl group to a lipoic acid moiety. The pyruvate dehydrogenase complex, catalyzes the overall conversion of pyruvate to acetyl-CoA and CO(2), and thereby links cytoplasmic glycolysis and the mitochondrial tricarboxylic acid (TCA) cycle. This Rattus norvegicus (Rat) protein is Dihydrolipoyllysine-residue acetyltransferase component of pyruvate dehydrogenase complex, mitochondrial.